The primary structure comprises 193 residues: Phosphoheptose isomerase (193 aa).

One can recognise an SIS domain in the interval 37–193 (LAASFKADGK…QLIEKEMASV (157 aa)). Residue 52 to 54 (NGG) coordinates substrate. Zn(2+) contacts are provided by His-61 and Glu-65. Substrate contacts are provided by residues Glu-65, 93 to 94 (ND), 119 to 121 (STS), Ser-124, and Gln-172. Positions 172 and 180 each coordinate Zn(2+).

The protein belongs to the SIS family. GmhA subfamily. As to quaternary structure, homotetramer. The cofactor is Zn(2+).

The protein resides in the cytoplasm. It carries out the reaction 2 D-sedoheptulose 7-phosphate = D-glycero-alpha-D-manno-heptose 7-phosphate + D-glycero-beta-D-manno-heptose 7-phosphate. The protein operates within carbohydrate biosynthesis; D-glycero-D-manno-heptose 7-phosphate biosynthesis; D-glycero-alpha-D-manno-heptose 7-phosphate and D-glycero-beta-D-manno-heptose 7-phosphate from sedoheptulose 7-phosphate: step 1/1. Its function is as follows. Catalyzes the isomerization of sedoheptulose 7-phosphate in D-glycero-D-manno-heptose 7-phosphate. The protein is Phosphoheptose isomerase of Edwardsiella ictaluri (strain 93-146).